The primary structure comprises 193 residues: Probable nicotinate-nucleotide adenylyltransferase (193 aa).

Belongs to the NadD family.

It catalyses the reaction nicotinate beta-D-ribonucleotide + ATP + H(+) = deamido-NAD(+) + diphosphate. Its pathway is cofactor biosynthesis; NAD(+) biosynthesis; deamido-NAD(+) from nicotinate D-ribonucleotide: step 1/1. Functionally, catalyzes the reversible adenylation of nicotinate mononucleotide (NaMN) to nicotinic acid adenine dinucleotide (NaAD). The polypeptide is Probable nicotinate-nucleotide adenylyltransferase (Endomicrobium trichonymphae).